Consider the following 341-residue polypeptide: Phosphoribosylformylglycinamidine cyclo-ligase (341 aa).

The protein belongs to the AIR synthase family.

It is found in the cytoplasm. The enzyme catalyses 2-formamido-N(1)-(5-O-phospho-beta-D-ribosyl)acetamidine + ATP = 5-amino-1-(5-phospho-beta-D-ribosyl)imidazole + ADP + phosphate + H(+). It participates in purine metabolism; IMP biosynthesis via de novo pathway; 5-amino-1-(5-phospho-D-ribosyl)imidazole from N(2)-formyl-N(1)-(5-phospho-D-ribosyl)glycinamide: step 2/2. The polypeptide is Phosphoribosylformylglycinamidine cyclo-ligase (Synechocystis sp. (strain ATCC 27184 / PCC 6803 / Kazusa)).